The primary structure comprises 258 residues: Methionine aminopeptidase (258 aa).

Histidine 84 contacts substrate. 3 residues coordinate a divalent metal cation: aspartate 102, aspartate 113, and histidine 176. Position 183 (histidine 183) interacts with substrate. Residues glutamate 211 and glutamate 242 each coordinate a divalent metal cation.

Belongs to the peptidase M24A family. Methionine aminopeptidase type 1 subfamily. As to quaternary structure, monomer. The cofactor is Co(2+). It depends on Zn(2+) as a cofactor. Mn(2+) serves as cofactor. Requires Fe(2+) as cofactor.

The catalysed reaction is Release of N-terminal amino acids, preferentially methionine, from peptides and arylamides.. Removes the N-terminal methionine from nascent proteins. The N-terminal methionine is often cleaved when the second residue in the primary sequence is small and uncharged (Met-Ala-, Cys, Gly, Pro, Ser, Thr, or Val). Requires deformylation of the N(alpha)-formylated initiator methionine before it can be hydrolyzed. In Aquifex aeolicus (strain VF5), this protein is Methionine aminopeptidase.